Consider the following 202-residue polypeptide: Cytochrome c oxidase assembly protein CtaG (202 aa).

Topologically, residues 1–14 are cytoplasmic; the sequence is MSDKAAAPRKQGRN. Residues 15–37 traverse the membrane as a helical; Signal-anchor for type II membrane protein segment; sequence NGAVVMMCLSFVFGMGAMSYAAV. Residues 38 to 202 lie on the Periplasmic side of the membrane; it reads PLYRIFCQVT…GGTVKIEKKL (165 aa).

It belongs to the COX11/CtaG family.

Its subcellular location is the cell inner membrane. Its function is as follows. Exerts its effect at some terminal stage of cytochrome c oxidase synthesis, probably by being involved in the insertion of the copper B into subunit I. The protein is Cytochrome c oxidase assembly protein CtaG of Rhizobium etli (strain ATCC 51251 / DSM 11541 / JCM 21823 / NBRC 15573 / CFN 42).